A 629-amino-acid chain; its full sequence is Endoglucanase 15 (629 aa).

The first 30 residues, 1 to 30, serve as a signal peptide directing secretion; it reads MAKNGGAHGAATLFGLLALASMVKLGFVAG. D87 serves as the catalytic Nucleophile. Catalysis depends on residues H421, D473, and E482. N-linked (GlcNAc...) asparagine glycans are attached at residues N520, N540, and N561.

This sequence belongs to the glycosyl hydrolase 9 (cellulase E) family.

The protein resides in the secreted. The enzyme catalyses Endohydrolysis of (1-&gt;4)-beta-D-glucosidic linkages in cellulose, lichenin and cereal beta-D-glucans.. The chain is Endoglucanase 15 from Oryza sativa subsp. japonica (Rice).